Here is a 613-residue protein sequence, read N- to C-terminus: Phosphoinositide phospholipase C 6 (613 aa).

One can recognise a PI-PLC X-box domain in the interval Gln137–Lys281. Active-site residues include His152 and His198. Positions Glu288–Lys349 are disordered. Residues Lys349–Met465 form the PI-PLC Y-box domain. Residues Lys466–Asp595 form the C2 domain.

The cofactor is Ca(2+). In terms of tissue distribution, expressed in leaves, flowers and siliques, but not in roots.

The protein localises to the cell membrane. It catalyses the reaction a 1,2-diacyl-sn-glycero-3-phospho-(1D-myo-inositol-4,5-bisphosphate) + H2O = 1D-myo-inositol 1,4,5-trisphosphate + a 1,2-diacyl-sn-glycerol + H(+). Its function is as follows. The production of the second messenger molecules diacylglycerol (DAG) and inositol 1,4,5-trisphosphate (IP3) is mediated by activated phosphatidylinositol-specific phospholipase C enzymes. This is Phosphoinositide phospholipase C 6 (PLC6) from Arabidopsis thaliana (Mouse-ear cress).